We begin with the raw amino-acid sequence, 169 residues long: Der GTPase-activating protein YihI (169 aa).

Disordered regions lie at residues 1–99 and 146–169; these read MKPS…QAEL and SYDD…LRGN. A compositionally biased stretch (basic residues) spans 10–19; the sequence is SKGHAKARRK. The segment covering 20-30 has biased composition (basic and acidic residues); that stretch reads TREELDQEARD. Residues 31 to 40 are compositionally biased toward basic residues; sequence RKRQKKRRGH. The span at 49–58 shows a compositional bias: polar residues; that stretch reads GNTTSGSKGQ. Positions 147-159 are enriched in acidic residues; the sequence is YDDDEEEEEDEKQ. Over residues 160 to 169 the composition is skewed to basic and acidic residues; that stretch reads EDMMRLLRGN.

It belongs to the YihI family. Interacts with Der.

A GTPase-activating protein (GAP) that modifies Der/EngA GTPase function. May play a role in ribosome biogenesis. In Escherichia coli O45:K1 (strain S88 / ExPEC), this protein is Der GTPase-activating protein YihI.